Consider the following 403-residue polypeptide: Phosphoglycerate kinase (403 aa).

Substrate contacts are provided by residues 21-23 (DFN), Arg-36, 59-62 (HLGR), Arg-119, and Arg-154. ATP-binding positions include Lys-207, Gly-299, Glu-330, and 357–360 (GGDA).

It belongs to the phosphoglycerate kinase family. In terms of assembly, monomer.

It localises to the cytoplasm. It carries out the reaction (2R)-3-phosphoglycerate + ATP = (2R)-3-phospho-glyceroyl phosphate + ADP. It functions in the pathway carbohydrate degradation; glycolysis; pyruvate from D-glyceraldehyde 3-phosphate: step 2/5. The sequence is that of Phosphoglycerate kinase from Chlamydia felis (strain Fe/C-56) (Chlamydophila felis).